The sequence spans 399 residues: Chorismate synthase (399 aa).

NADP(+) is bound by residues arginine 40 and arginine 46. FMN-binding positions include 134-136 (RAS), 255-256 (QA), glycine 299, 314-318 (KPIST), and arginine 340.

This sequence belongs to the chorismate synthase family. As to quaternary structure, homotetramer. FMNH2 serves as cofactor.

The catalysed reaction is 5-O-(1-carboxyvinyl)-3-phosphoshikimate = chorismate + phosphate. It functions in the pathway metabolic intermediate biosynthesis; chorismate biosynthesis; chorismate from D-erythrose 4-phosphate and phosphoenolpyruvate: step 7/7. Functionally, catalyzes the anti-1,4-elimination of the C-3 phosphate and the C-6 proR hydrogen from 5-enolpyruvylshikimate-3-phosphate (EPSP) to yield chorismate, which is the branch point compound that serves as the starting substrate for the three terminal pathways of aromatic amino acid biosynthesis. This reaction introduces a second double bond into the aromatic ring system. The chain is Chorismate synthase from Mycolicibacterium smegmatis (strain ATCC 700084 / mc(2)155) (Mycobacterium smegmatis).